We begin with the raw amino-acid sequence, 345 residues long: PI-PLC X domain-containing protein 1 (345 aa).

The PI-PLC X-box domain maps to Q52–A228.

In terms of tissue distribution, expressed at highest levels in brain and kidney. Also detected in stomach, thymus and skeletal muscle.

The protein resides in the cytoplasm. The polypeptide is PI-PLC X domain-containing protein 1 (Plcxd1) (Mus musculus (Mouse)).